The following is an 86-amino-acid chain: U15-lycotoxin-Ls1d (86 aa).

A signal peptide spans 1–20 (MNSKIFAVLLLLGLLSCVLS). Positions 21–66 (DQYCPKSSITACKKMNIRNDCCKDDDCTGGSWCCATPCGNFCKYPT) constitute a WAP domain. Disulfide bonds link cysteine 24–cysteine 54, cysteine 32–cysteine 58, cysteine 41–cysteine 53, cysteine 42–cysteine 80, and cysteine 47–cysteine 62.

The protein belongs to the venom protein 11 family. 01 (wap-1) subfamily. Post-translationally, contains 5 disulfide bonds. As to expression, expressed by the venom gland.

It is found in the secreted. Functionally, has antibacterial activity. The polypeptide is U15-lycotoxin-Ls1d (Lycosa singoriensis (Wolf spider)).